Consider the following 466-residue polypeptide: Benzoate transport protein (466 aa).

Residues 1–22 (MSREINVNQMIDDSKLTPFHWR) lie on the Cytoplasmic side of the membrane. A helical transmembrane segment spans residues 23–43 (VIILSTLIIIFDGYDLVIYGV). Topologically, residues 44-60 (ALPLLMKEWAIDPVTAG) are periplasmic. Residues 61 to 81 (FIGSIALFGMMFGALIFGTIA) traverse the membrane as a helical segment. Residues 82-93 (DKLEHLGVSRKK) lie on the Cytoplasmic side of the membrane. Residues 94-114 (VIAVCIILFSLCTVLCGFSET) form a helical membrane-spanning segment. Topologically, residues 115-119 (TTQFS) are periplasmic. A helical transmembrane segment spans residues 120–140 (IFRFLAGVGIGGVMPNVIALV). Residues 141–150 (SEYAPKKFKS) are Cytoplasmic-facing. The chain crosses the membrane as a helical span at residues 151–171 (FFVTLMFSGYAIGGMTAAFLG). Topologically, residues 172-181 (SILVPLYGWK) are periplasmic. A helical membrane pass occupies residues 182–202 (IMFMIAGIPLVLLLPLMKVLP). At 203-258 (ESIDYLVRKKKDETVRFIMTKMVPSYQYQPDHVFVLNSSNQNQAQAPVKMIFQEQR) the chain is on the cytoplasmic side. Residues 259–279 (AFSTMMFWCSIFMTLIMVYAL) form a helical membrane-spanning segment. The Periplasmic portion of the chain corresponds to 280–297 (GNWLPKLMIEAGYNLSKS). The chain crosses the membrane as a helical span at residues 298-318 (LIFLFSLNVGGMIGSILGGYL). The Cytoplasmic segment spans residues 319–325 (ADRYNVK). Residues 326–346 (FVTMGLLLLGAISLSLLSFQF) form a helical membrane-spanning segment. The Periplasmic portion of the chain corresponds to 347 to 348 (SS). A helical membrane pass occupies residues 349–369 (VILYILIACAGAASIGAQIML). Topologically, residues 370-387 (LAYMAKFYAPNVRSTGIG) are cytoplasmic. Residues 388–408 (WGLGMGRVGAILGPILTGWLL) form a helical membrane-spanning segment. Topologically, residues 409–414 (SLQLPH) are periplasmic. A helical transmembrane segment spans residues 415–435 (FYNFLALSIPAVLGIVTVFLI). The Cytoplasmic portion of the chain corresponds to 436 to 466 (NDRRMYQPEPISPIANQNDTTTVKVNEAVSH).

Belongs to the major facilitator superfamily. Aromatic acid:H(+) symporter (AAHS) (TC 2.A.1.15) family.

It is found in the cell inner membrane. Probable uptake of benzoate. This Acinetobacter baylyi (strain ATCC 33305 / BD413 / ADP1) protein is Benzoate transport protein (benK).